The following is a 59-amino-acid chain: Alpha-like toxin CsEv5 (59 aa).

An LCN-type CS-alpha/beta domain is found at 1-59 (KDGYPVDSKGCKLSCVANNYCDNQCKMKKASGGHCYAMSCYCEGLPENAKVSDSATNIC). 4 cysteine pairs are disulfide-bonded: cysteine 11–cysteine 59, cysteine 15–cysteine 35, cysteine 21–cysteine 40, and cysteine 25–cysteine 42.

Belongs to the long (4 C-C) scorpion toxin superfamily. Sodium channel inhibitor family. As to expression, expressed by the venom gland.

It localises to the secreted. Its function is as follows. Binds voltage-independently sodium channels (Nav) and inhibits the inactivation of the activated channels, thereby blocking neuronal transmission. Is highly toxic to insects and barely toxic to mammals. As it does not compete with the classical alpha-toxin AaH2, this toxin is considered as an alpha-like toxin. This Centruroides sculpturatus (Arizona bark scorpion) protein is Alpha-like toxin CsEv5.